Reading from the N-terminus, the 185-residue chain is ATP-dependent protease subunit HslV (185 aa).

Residue threonine 12 is part of the active site. Residues alanine 168, cysteine 171, and threonine 174 each contribute to the Na(+) site.

This sequence belongs to the peptidase T1B family. HslV subfamily. A double ring-shaped homohexamer of HslV is capped on each side by a ring-shaped HslU homohexamer. The assembly of the HslU/HslV complex is dependent on binding of ATP.

The protein resides in the cytoplasm. It carries out the reaction ATP-dependent cleavage of peptide bonds with broad specificity.. With respect to regulation, allosterically activated by HslU binding. Protease subunit of a proteasome-like degradation complex believed to be a general protein degrading machinery. This is ATP-dependent protease subunit HslV from Roseobacter denitrificans (strain ATCC 33942 / OCh 114) (Erythrobacter sp. (strain OCh 114)).